We begin with the raw amino-acid sequence, 160 residues long: Deoxyuridine 5'-triphosphate nucleotidohydrolase (160 aa).

Residues 76-78 (RSG), N89, and 93-95 (TID) each bind substrate. Over residues 139-149 (HTLSDTERGED) the composition is skewed to basic and acidic residues. Residues 139–160 (HTLSDTERGEDGFGSTGHGSHQ) are disordered. Residues 150-160 (GFGSTGHGSHQ) are compositionally biased toward gly residues.

Belongs to the dUTPase family. Requires Mg(2+) as cofactor.

The catalysed reaction is dUTP + H2O = dUMP + diphosphate + H(+). It participates in pyrimidine metabolism; dUMP biosynthesis; dUMP from dCTP (dUTP route): step 2/2. In terms of biological role, this enzyme is involved in nucleotide metabolism: it produces dUMP, the immediate precursor of thymidine nucleotides and it decreases the intracellular concentration of dUTP so that uracil cannot be incorporated into DNA. In Beijerinckia indica subsp. indica (strain ATCC 9039 / DSM 1715 / NCIMB 8712), this protein is Deoxyuridine 5'-triphosphate nucleotidohydrolase.